The sequence spans 337 residues: Dihydroorotate dehydrogenase (quinone) (337 aa).

FMN is bound by residues 61 to 65 (AGLDK) and threonine 85. Lysine 65 is a substrate binding site. 110–114 (NRMGF) contributes to the substrate binding site. Positions 138 and 171 each coordinate FMN. Asparagine 171 lines the substrate pocket. Catalysis depends on serine 174, which acts as the Nucleophile. Residue asparagine 176 participates in substrate binding. FMN is bound by residues lysine 216 and threonine 244. 245 to 246 (NT) lines the substrate pocket. FMN contacts are provided by residues glycine 267, glycine 296, and 317-318 (YS).

It belongs to the dihydroorotate dehydrogenase family. Type 2 subfamily. In terms of assembly, monomer. It depends on FMN as a cofactor.

It is found in the cell membrane. The enzyme catalyses (S)-dihydroorotate + a quinone = orotate + a quinol. It functions in the pathway pyrimidine metabolism; UMP biosynthesis via de novo pathway; orotate from (S)-dihydroorotate (quinone route): step 1/1. Its function is as follows. Catalyzes the conversion of dihydroorotate to orotate with quinone as electron acceptor. The sequence is that of Dihydroorotate dehydrogenase (quinone) from Thiobacillus denitrificans (strain ATCC 25259 / T1).